A 455-amino-acid chain; its full sequence is Bifunctional protein GlmU (455 aa).

The tract at residues 1 to 227 is pyrophosphorylase; it reads MGLSVIILAA…CEEVQGVNDR (227 aa). Residues 8 to 11, Lys-22, Gln-73, 78 to 79, 100 to 102, Gly-137, Glu-152, Asn-167, and Asn-225 contribute to the UDP-N-acetyl-alpha-D-glucosamine site; these read LAAG, GT, and YGD. Mg(2+) is bound at residue Asp-102. Asn-225 contributes to the Mg(2+) binding site. The linker stretch occupies residues 228-248; the sequence is WELTKLERYYQRLMAKKLSLA. Positions 249–455 are N-acetyltransferase; sequence GVTIIDPERF…KGWHRPTKKE (207 aa). UDP-N-acetyl-alpha-D-glucosamine-binding residues include Arg-332 and Lys-350. Catalysis depends on His-362, which acts as the Proton acceptor. Tyr-365 and Asn-376 together coordinate UDP-N-acetyl-alpha-D-glucosamine. Acetyl-CoA is bound by residues Ala-379, 385–386, Ser-404, Ala-422, and Arg-439; that span reads NY.

This sequence in the N-terminal section; belongs to the N-acetylglucosamine-1-phosphate uridyltransferase family. The protein in the C-terminal section; belongs to the transferase hexapeptide repeat family. Homotrimer. The cofactor is Mg(2+).

It is found in the cytoplasm. It carries out the reaction alpha-D-glucosamine 1-phosphate + acetyl-CoA = N-acetyl-alpha-D-glucosamine 1-phosphate + CoA + H(+). It catalyses the reaction N-acetyl-alpha-D-glucosamine 1-phosphate + UTP + H(+) = UDP-N-acetyl-alpha-D-glucosamine + diphosphate. It participates in nucleotide-sugar biosynthesis; UDP-N-acetyl-alpha-D-glucosamine biosynthesis; N-acetyl-alpha-D-glucosamine 1-phosphate from alpha-D-glucosamine 6-phosphate (route II): step 2/2. It functions in the pathway nucleotide-sugar biosynthesis; UDP-N-acetyl-alpha-D-glucosamine biosynthesis; UDP-N-acetyl-alpha-D-glucosamine from N-acetyl-alpha-D-glucosamine 1-phosphate: step 1/1. Its pathway is bacterial outer membrane biogenesis; LPS lipid A biosynthesis. Functionally, catalyzes the last two sequential reactions in the de novo biosynthetic pathway for UDP-N-acetylglucosamine (UDP-GlcNAc). The C-terminal domain catalyzes the transfer of acetyl group from acetyl coenzyme A to glucosamine-1-phosphate (GlcN-1-P) to produce N-acetylglucosamine-1-phosphate (GlcNAc-1-P), which is converted into UDP-GlcNAc by the transfer of uridine 5-monophosphate (from uridine 5-triphosphate), a reaction catalyzed by the N-terminal domain. The polypeptide is Bifunctional protein GlmU (Coxiella burnetii (strain RSA 493 / Nine Mile phase I)).